Reading from the N-terminus, the 662-residue chain is UPF0313 protein CPR_1216 (662 aa).

The 272-residue stretch at alanine 296–lysine 567 folds into the Radical SAM core domain. Residues cysteine 310, cysteine 314, and cysteine 317 each contribute to the [4Fe-4S] cluster site. The disordered stretch occupies residues arginine 597–arginine 662. Positions serine 618–lysine 632 are enriched in basic and acidic residues. A compositionally biased stretch (basic residues) spans arginine 633–lysine 644.

This sequence belongs to the UPF0313 family. Requires [4Fe-4S] cluster as cofactor.

This is UPF0313 protein CPR_1216 from Clostridium perfringens (strain SM101 / Type A).